We begin with the raw amino-acid sequence, 384 residues long: MSWQEKINAALDARRTADALRRRYPVAQGAGRWLVADECQYLNFSSNDYLGLSHHPDIIRAWKQGAEQFGVGSGGSGHVSGYSVAHQALEEELAEWLGYSRALLFISGFAANQAVITAMMAKEDRIVADRLSHASLLEAASLSPAQLRRFTHNDVAHLARLLASPCPGQQLVVTEGVFSMDGDRAPLAEIQQVTQQHNGWLVVDDAHGTGVIGEQGRGSCWQQQVKPELLVVTFGKGFGVSGAAVLCSNTVADYLLQFARHLIYSTSMPPAQAQALRASLAVIRGEEGDARREKLAVLITRFRAGLQGLPFTLADSRSAIQPLIVGDNARALHLAEKLRQQGCWVTAIRPPTVPAGTARLRLTLTAAHETQDIDLLLEVLHGNG.

A substrate-binding site is contributed by R21. G108–F109 is a binding site for pyridoxal 5'-phosphate. Position 133 (H133) interacts with substrate. 3 residues coordinate pyridoxal 5'-phosphate: S179, H207, and T233. The residue at position 236 (K236) is an N6-(pyridoxal phosphate)lysine. T352 provides a ligand contact to substrate.

Belongs to the class-II pyridoxal-phosphate-dependent aminotransferase family. BioF subfamily. As to quaternary structure, homodimer. The cofactor is pyridoxal 5'-phosphate.

The enzyme catalyses 6-carboxyhexanoyl-[ACP] + L-alanine + H(+) = (8S)-8-amino-7-oxononanoate + holo-[ACP] + CO2. The protein operates within cofactor biosynthesis; biotin biosynthesis. Functionally, catalyzes the decarboxylative condensation of pimeloyl-[acyl-carrier protein] and L-alanine to produce 8-amino-7-oxononanoate (AON), [acyl-carrier protein], and carbon dioxide. This chain is 8-amino-7-oxononanoate synthase, found in Escherichia fergusonii (strain ATCC 35469 / DSM 13698 / CCUG 18766 / IAM 14443 / JCM 21226 / LMG 7866 / NBRC 102419 / NCTC 12128 / CDC 0568-73).